Here is a 125-residue protein sequence, read N- to C-terminus: U-scoloptoxin(05)-Er1a (125 aa).

A signal peptide spans 1 to 20 (MLSLGVSIFLLVFLIPENSG).

It belongs to the scoloptoxin-05 family. Post-translationally, contains 4 disulfide bonds. In terms of tissue distribution, expressed by the venom gland.

It is found in the secreted. The sequence is that of U-scoloptoxin(05)-Er1a from Ethmostigmus rubripes (Giant centipede).